The sequence spans 345 residues: S-adenosylmethionine:tRNA ribosyltransferase-isomerase (345 aa).

The protein belongs to the QueA family. In terms of assembly, monomer.

It is found in the cytoplasm. The catalysed reaction is 7-aminomethyl-7-carbaguanosine(34) in tRNA + S-adenosyl-L-methionine = epoxyqueuosine(34) in tRNA + adenine + L-methionine + 2 H(+). It participates in tRNA modification; tRNA-queuosine biosynthesis. Transfers and isomerizes the ribose moiety from AdoMet to the 7-aminomethyl group of 7-deazaguanine (preQ1-tRNA) to give epoxyqueuosine (oQ-tRNA). The chain is S-adenosylmethionine:tRNA ribosyltransferase-isomerase from Shewanella amazonensis (strain ATCC BAA-1098 / SB2B).